Here is a 165-residue protein sequence, read N- to C-terminus: Sec-independent protein translocase protein TatB (165 aa).

A helical membrane pass occupies residues 1-21; it reads MFDVSFTELIVIGVVALIVLG. Residues 67 to 84 show a composition bias toward polar residues; it reads DSTAQDVNQSLRSATDSL. The disordered stretch occupies residues 67-165; sequence DSTAQDVNQS…PKSPSTGNAT (99 aa). The segment covering 127 to 159 has biased composition (low complexity); it reads KLPGTPATLPATAAAEPTPAAPAASQAEAPKSP.

The protein belongs to the TatB family. As to quaternary structure, the Tat system comprises two distinct complexes: a TatABC complex, containing multiple copies of TatA, TatB and TatC subunits, and a separate TatA complex, containing only TatA subunits. Substrates initially bind to the TatABC complex, which probably triggers association of the separate TatA complex to form the active translocon.

The protein resides in the cell inner membrane. In terms of biological role, part of the twin-arginine translocation (Tat) system that transports large folded proteins containing a characteristic twin-arginine motif in their signal peptide across membranes. Together with TatC, TatB is part of a receptor directly interacting with Tat signal peptides. TatB may form an oligomeric binding site that transiently accommodates folded Tat precursor proteins before their translocation. The protein is Sec-independent protein translocase protein TatB of Bordetella avium (strain 197N).